The primary structure comprises 287 residues: 4-hydroxybenzoate octaprenyltransferase (287 aa).

The next 8 membrane-spanning stretches (helical) occupy residues 19–39 (IGSL…ADGL), 42–62 (WHVL…GCVI), 95–115 (FFAV…TLTI), 136–156 (YLPQ…AYAA), 166–186 (WLLF…YAMV), 210–230 (IIGL…SQLA), 233–253 (GIYY…QWLI), and 264–284 (AFLN…ASVL).

This sequence belongs to the UbiA prenyltransferase family. It depends on Mg(2+) as a cofactor.

It is found in the cell inner membrane. The enzyme catalyses all-trans-octaprenyl diphosphate + 4-hydroxybenzoate = 4-hydroxy-3-(all-trans-octaprenyl)benzoate + diphosphate. The protein operates within cofactor biosynthesis; ubiquinone biosynthesis. Its function is as follows. Catalyzes the prenylation of para-hydroxybenzoate (PHB) with an all-trans polyprenyl group. Mediates the second step in the final reaction sequence of ubiquinone-8 (UQ-8) biosynthesis, which is the condensation of the polyisoprenoid side chain with PHB, generating the first membrane-bound Q intermediate 3-octaprenyl-4-hydroxybenzoate. The protein is 4-hydroxybenzoate octaprenyltransferase of Aliivibrio fischeri (strain MJ11) (Vibrio fischeri).